Reading from the N-terminus, the 150-residue chain is MTSQPHLHQHAAEIQEFGTVTQLPIALSHDARQYSCQRLNRVLADTQFLYALYKKCHWGMRGPTAYQLHLLFDKHAQEQLELVDALAERVQTLGGVAVGDPRHAARITGVPRPPDGIEDVHSMLSRLLDAHETILADVRDAATRVAGLGD.

This sequence belongs to the Dps family.

This is an uncharacterized protein from Kitasatospora aureofaciens (Streptomyces aureofaciens).